The chain runs to 371 residues: Phospho-N-acetylmuramoyl-pentapeptide-transferase (371 aa).

Helical transmembrane passes span 21–41 (NHIL…DFYY), 46–66 (LTIP…IGIP), 92–112 (PTMG…ILYF), 119–139 (IILT…IDDF), 156–176 (ILLQ…NNLI), 182–202 (IANK…FVLL), 216–236 (GLLS…ILIE), 241–261 (NSTL…FLFL), 268–288 (LFMG…IALI), 296–316 (LIMG…VSIF), and 349–369 (IVSS…IFLI).

Belongs to the glycosyltransferase 4 family. MraY subfamily. Mg(2+) is required as a cofactor.

Its subcellular location is the cell inner membrane. The catalysed reaction is UDP-N-acetyl-alpha-D-muramoyl-L-alanyl-gamma-D-glutamyl-meso-2,6-diaminopimeloyl-D-alanyl-D-alanine + di-trans,octa-cis-undecaprenyl phosphate = di-trans,octa-cis-undecaprenyl diphospho-N-acetyl-alpha-D-muramoyl-L-alanyl-D-glutamyl-meso-2,6-diaminopimeloyl-D-alanyl-D-alanine + UMP. It functions in the pathway cell wall biogenesis; peptidoglycan biosynthesis. Functionally, catalyzes the initial step of the lipid cycle reactions in the biosynthesis of the cell wall peptidoglycan: transfers peptidoglycan precursor phospho-MurNAc-pentapeptide from UDP-MurNAc-pentapeptide onto the lipid carrier undecaprenyl phosphate, yielding undecaprenyl-pyrophosphoryl-MurNAc-pentapeptide, known as lipid I. This chain is Phospho-N-acetylmuramoyl-pentapeptide-transferase, found in Prochlorococcus marinus (strain NATL2A).